Consider the following 87-residue polypeptide: Cytochrome c oxidase subunit 6B1 (87 aa).

Positions 28–74 constitute a CHCH domain; sequence TRNCWQNYLDFHRCQKAMTTKGGNVSVCEWYQRVYQSLCPTSWVTDW. Positions 31–41 match the Cx9C motif motif; it reads CWQNYLDFHRC. Disulfide bonds link C31–C66 and C41–C55. Residues 55–66 carry the Cx10C motif motif; the sequence is CEWYQRVYQSLC.

The protein resides in the mitochondrion intermembrane space. In terms of biological role, connects the two COX monomers into the physiological dimeric form. The polypeptide is Cytochrome c oxidase subunit 6B1 (COX6B1) (Macaca fascicularis (Crab-eating macaque)).